A 273-amino-acid chain; its full sequence is Undecaprenyl-diphosphatase (273 aa).

Transmembrane regions (helical) follow at residues 13 to 35 (GLVEGFTEFLPISSTGHLIVFGN), 45 to 62 (VFEITIQLGAVLAVVFEY), 82 to 102 (FVLNLAIAFIPAAVMGLLFGK), 108 to 128 (LFNPLSVAVMLVLGGFFILWV), 186 to 206 (TEFSFFLAVPMMVAATAYDVL), 219 to 239 (LILIGFVAAFVSGLVAVKALL), and 250 to 270 (FAYYRIVFGIAIIILWLSGWI).

It belongs to the UppP family.

It localises to the cell inner membrane. It catalyses the reaction di-trans,octa-cis-undecaprenyl diphosphate + H2O = di-trans,octa-cis-undecaprenyl phosphate + phosphate + H(+). Its function is as follows. Catalyzes the dephosphorylation of undecaprenyl diphosphate (UPP). Confers resistance to bacitracin. The protein is Undecaprenyl-diphosphatase of Neisseria meningitidis serogroup A / serotype 4A (strain DSM 15465 / Z2491).